The sequence spans 277 residues: uncharacterized protein (277 aa).

Disordered regions lie at residues 33–168 (KNDN…VTTR) and 210–277 (NKLL…PIEF). A compositionally biased stretch (basic and acidic residues) spans 34–45 (NDNDERTAHEES). A compositionally biased stretch (basic residues) spans 86–99 (LKSKSKRKTKKGGS). Basic and acidic residues-rich tracts occupy residues 100–113 (KPRE…KHIV), 151–168 (AKEL…VTTR), and 216–230 (TNED…NKEK). Residues 231 to 241 (DRKRRERRTAR) are compositionally biased toward basic residues. A compositionally biased stretch (basic and acidic residues) spans 242–258 (RKDERKQEKKQEKKQDN). The span at 259–271 (KTSQSFPSSTDMN) shows a compositional bias: polar residues.

The protein localises to the cytoplasm. This is an uncharacterized protein from Saccharomyces cerevisiae (strain ATCC 204508 / S288c) (Baker's yeast).